A 1383-amino-acid chain; its full sequence is MDEGVNLVFHKKVIDGTAIKRLISRLIDHFGMAHTSHILDQVKTLGFQQATATSISLGIDDLLTIPSKGWLVQDAEQQSLSLEKHHHYGNVHAVEKLRQSIEVWYATSEYLRQEMNPNFRMTDPFNPVHIMSFSGARGNASQVHQLVGMRGLMSDPQGQMIDLPIQSNLREGLSLTEYIISCYGARKGVVDTAVRTSDAGYLTRRLVEVVQHIVVRRTDCGTLRGISVSPRRMPERIFIQTLIGRVLADDIYIGSRCIAIRNQDIGIGLVNRFITFRIQPISIRTPFTCRSTSWICRLCYGRSPTHGDLVELGEAVGIIAGQSIGEPGTQLTLRTFHTGGVFTGGTAEHVRAPSNGKIKFNFNEALVHPARTRHGHPALLCSMDLDVTIESEDILHNLTIPPKSFLLVQNNQYVESEQVIAEICAGTSTFHFKERVRKHIYSDSEGEMHWSTDVYHAPEFTYSNVHLLPKTSHLWILSGGSCRSRGAPFSLHKDQDQMNPRSTERERRYLSSLSANNDQIRYKFFSSSFSGKKKDDRSPGYSEMNRIICTLHCNLIYPSILRENSDLLAKRRRNRLVIPVQSSQEREKELIPHSGISIELPINGIFRKKSILAFFDDPRYRTKSSGITQYETMGMHSIVKKEGLVDYRGINEFKPKYQMTIDRFFFIPEEVHILPESSSIMVRNNSLIGVDTRIALNTRSRAGGLVRVERKKRGIALQIFSGTIHFPGETDKISWDSGILIPPGTGKRNSKESKKWKNGIYVQRITPTKKKHFVLFRPVVTYEIADGLNLARLFPPDLCQEKDNMQLQIVNYIVYGNGKPIREISDTSIQLVRTWFILNWDQDKKSASAEAAHASFVEVRAKGLIRDFLRIDLVKSPILDPRKRNDPSGSGLISDNVSDHTNINPFYSKPKMKQSPRQNHGTIRTLLNQNKECPSLMILSASNCFRMGPFNDVKSQNVIKESIKKDAIIQIRNSIGPLGTALQVVNFDSFYYFITHNQVLLTKYLQVENLKQTFQVLQYYLMDESGRIYNPDPRSNIVLNSFNLSWYFLPHNNYENSCEEISTIVSLGQFICENGCIAKNGPYLRSGQVLIVQLDSVVIRSAKPYLATPGATVHGHYGEILYDGDTVVTFLYEKSRSGDITQGLPKVEQVLEVRSVDSISVNLEKRVENWNEHITRILGFPWGFLIGAELTIVQSRISLVNKIQKVYRSQGVQIHNRHIEIIVRQITSKVLVSEDGMSNVFLPRELIGLLRAERTGRALEESICYKAFLLGITRTSLNTQSFISEASFQETARVLAKAALRGRIDWLKGLKENVVIGGMIPVGTGFKGLVHCSKQHKSIPKNKHFFEGEIRDILFHHRELFDSCISKNFHDTPEQSFRVFNDS.

Positions 220, 289, 296, and 299 each coordinate Zn(2+).

It belongs to the RNA polymerase beta' chain family. RpoC2 subfamily. As to quaternary structure, in plastids the minimal PEP RNA polymerase catalytic core is composed of four subunits: alpha, beta, beta', and beta''. When a (nuclear-encoded) sigma factor is associated with the core the holoenzyme is formed, which can initiate transcription. Zn(2+) is required as a cofactor.

It is found in the plastid. It localises to the chloroplast. It carries out the reaction RNA(n) + a ribonucleoside 5'-triphosphate = RNA(n+1) + diphosphate. In terms of biological role, DNA-dependent RNA polymerase catalyzes the transcription of DNA into RNA using the four ribonucleoside triphosphates as substrates. This chain is DNA-directed RNA polymerase subunit beta'', found in Oenothera elata subsp. hookeri (Hooker's evening primrose).